The chain runs to 321 residues: GDP-L-fucose synthase (321 aa).

14–20 (GGSGLVG) lines the NADP(+) pocket. Tyrosine 143 functions as the Proton donor/acceptor in the catalytic mechanism. NADP(+)-binding positions include lysine 147, 170-173 (PTNV), and histidine 186. Residues lysine 194, tryptophan 208, arginine 215, and aspartate 277 each contribute to the substrate site.

It belongs to the NAD(P)-dependent epimerase/dehydratase family. Fucose synthase subfamily. In terms of assembly, homodimer.

It catalyses the reaction GDP-beta-L-fucose + NADP(+) = GDP-4-dehydro-alpha-D-rhamnose + NADPH + H(+). The protein operates within nucleotide-sugar biosynthesis; GDP-L-fucose biosynthesis via de novo pathway; GDP-L-fucose from GDP-alpha-D-mannose: step 2/2. Functionally, catalyzes the two-step NADP-dependent conversion of GDP-4-dehydro-6-deoxy-D-mannose to GDP-fucose, involving an epimerase and a reductase reaction. The polypeptide is GDP-L-fucose synthase (GFUS) (Pongo abelii (Sumatran orangutan)).